The following is a 250-amino-acid chain: Golgi SNAP receptor complex member 1 (250 aa).

The residue at position 2 (A2) is an N-acetylalanine. The Cytoplasmic segment spans residues A2 to D229. A coiled-coil region spans residues W9 to F30. Residues S38–N59 form a disordered region. Residues S41–S51 show a composition bias toward basic and acidic residues. Residues E68–A95 adopt a coiled-coil conformation. S141 carries the phosphoserine modification. The helical; Anchor for type IV membrane protein transmembrane segment at S230–H250 threads the bilayer.

The protein belongs to the GOSR1 family. In terms of assembly, component of several multiprotein Golgi SNARE complexes. Identified in a SNARE complex with BET1, STX5 and YKT6, in a SNARE complex with BET1L, STX5 and YKT6, in a SNARE complex with STX5, GOSR2, SEC22B and BET1, and in complex with STX5 and COG3. Interacts with GABARAPL2.

The protein resides in the golgi apparatus membrane. Its function is as follows. Involved in transport from the ER to the Golgi apparatus as well as in intra-Golgi transport. It belongs to a super-family of proteins called t-SNAREs or soluble NSF (N-ethylmaleimide-sensitive factor) attachment protein receptor. May play a protective role against hydrogen peroxide induced cytotoxicity under glutathione depleted conditions in neuronal cells by regulating the intracellular ROS levels via inhibition of p38 MAPK (MAPK11, MAPK12, MAPK13 and MAPK14). Participates in docking and fusion stage of ER to cis-Golgi transport. Plays an important physiological role in VLDL-transport vesicle-Golgi fusion and thus in VLDL delivery to the hepatic cis-Golgi. This is Golgi SNAP receptor complex member 1 (GOSR1) from Cricetulus griseus (Chinese hamster).